A 171-amino-acid chain; its full sequence is Serine acetyltransferase (171 aa).

It belongs to the transferase hexapeptide repeat family.

It is found in the cytoplasm. It catalyses the reaction L-serine + acetyl-CoA = O-acetyl-L-serine + CoA. It participates in amino-acid biosynthesis; L-cysteine biosynthesis; L-cysteine from L-serine: step 1/2. The sequence is that of Serine acetyltransferase (cysE) from Helicobacter pylori (strain ATCC 700392 / 26695) (Campylobacter pylori).